The sequence spans 120 residues: Flagellar protein FliT (120 aa).

The segment at 1 to 50 (MERHQHLLSEYQQILTLSEQMLVLATEGNWDALVDLEMTYLKAVESTANI) is required for homodimerization. Residues 60–98 (LQDLLREKLRAILDNEIEIKRLLQLRLDRLSDLVGQSTK) form a fliD binding region.

This sequence belongs to the FliT family. As to quaternary structure, homodimer. Interacts with FliD and FlhC.

Its subcellular location is the cytoplasm. It localises to the cytosol. Functionally, dual-function protein that regulates the transcription of class 2 flagellar operons and that also acts as an export chaperone for the filament-capping protein FliD. As a transcriptional regulator, acts as an anti-FlhDC factor; it directly binds FlhC, thus inhibiting the binding of the FlhC/FlhD complex to class 2 promoters, resulting in decreased expression of class 2 flagellar operons. As a chaperone, effects FliD transition to the membrane by preventing its premature polymerization, and by directing it to the export apparatus. This is Flagellar protein FliT from Yersinia enterocolitica serotype O:8 / biotype 1B (strain NCTC 13174 / 8081).